Here is a 100-residue protein sequence, read N- to C-terminus: Integration host factor subunit alpha (100 aa).

The protein belongs to the bacterial histone-like protein family. Heterodimer of an alpha and a beta chain.

In terms of biological role, this protein is one of the two subunits of integration host factor, a specific DNA-binding protein that functions in genetic recombination as well as in transcriptional and translational control. Involved in hydrogenase gene expression. This chain is Integration host factor subunit alpha (ihfA), found in Rhodobacter capsulatus (Rhodopseudomonas capsulata).